Here is a 314-residue protein sequence, read N- to C-terminus: Glycine--tRNA ligase alpha subunit (314 aa).

Belongs to the class-II aminoacyl-tRNA synthetase family. Tetramer of two alpha and two beta subunits.

The protein resides in the cytoplasm. It carries out the reaction tRNA(Gly) + glycine + ATP = glycyl-tRNA(Gly) + AMP + diphosphate. The polypeptide is Glycine--tRNA ligase alpha subunit (Leuconostoc citreum (strain KM20)).